The sequence spans 315 residues: 4-hydroxy-3-methylbut-2-enyl diphosphate reductase (315 aa).

Cysteine 12 is a [4Fe-4S] cluster binding site. Histidine 43 and histidine 81 together coordinate (2E)-4-hydroxy-3-methylbut-2-enyl diphosphate. Histidine 43 and histidine 81 together coordinate dimethylallyl diphosphate. Isopentenyl diphosphate is bound by residues histidine 43 and histidine 81. Cysteine 103 contributes to the [4Fe-4S] cluster binding site. Histidine 131 is a binding site for (2E)-4-hydroxy-3-methylbut-2-enyl diphosphate. Histidine 131 is a binding site for dimethylallyl diphosphate. Isopentenyl diphosphate is bound at residue histidine 131. Glutamate 133 acts as the Proton donor in catalysis. Threonine 170 lines the (2E)-4-hydroxy-3-methylbut-2-enyl diphosphate pocket. Residue cysteine 198 coordinates [4Fe-4S] cluster. Serine 226, asparagine 228, and serine 271 together coordinate (2E)-4-hydroxy-3-methylbut-2-enyl diphosphate. 3 residues coordinate dimethylallyl diphosphate: serine 226, asparagine 228, and serine 271. Residues serine 226, asparagine 228, and serine 271 each contribute to the isopentenyl diphosphate site.

This sequence belongs to the IspH family. It depends on [4Fe-4S] cluster as a cofactor.

The catalysed reaction is isopentenyl diphosphate + 2 oxidized [2Fe-2S]-[ferredoxin] + H2O = (2E)-4-hydroxy-3-methylbut-2-enyl diphosphate + 2 reduced [2Fe-2S]-[ferredoxin] + 2 H(+). It catalyses the reaction dimethylallyl diphosphate + 2 oxidized [2Fe-2S]-[ferredoxin] + H2O = (2E)-4-hydroxy-3-methylbut-2-enyl diphosphate + 2 reduced [2Fe-2S]-[ferredoxin] + 2 H(+). Its pathway is isoprenoid biosynthesis; dimethylallyl diphosphate biosynthesis; dimethylallyl diphosphate from (2E)-4-hydroxy-3-methylbutenyl diphosphate: step 1/1. It participates in isoprenoid biosynthesis; isopentenyl diphosphate biosynthesis via DXP pathway; isopentenyl diphosphate from 1-deoxy-D-xylulose 5-phosphate: step 6/6. Catalyzes the conversion of 1-hydroxy-2-methyl-2-(E)-butenyl 4-diphosphate (HMBPP) into a mixture of isopentenyl diphosphate (IPP) and dimethylallyl diphosphate (DMAPP). Acts in the terminal step of the DOXP/MEP pathway for isoprenoid precursor biosynthesis. The polypeptide is 4-hydroxy-3-methylbut-2-enyl diphosphate reductase (Bacillus cytotoxicus (strain DSM 22905 / CIP 110041 / 391-98 / NVH 391-98)).